The chain runs to 235 residues: Leucyl/phenylalanyl-tRNA--protein transferase (235 aa).

The protein belongs to the L/F-transferase family.

It is found in the cytoplasm. The enzyme catalyses N-terminal L-lysyl-[protein] + L-leucyl-tRNA(Leu) = N-terminal L-leucyl-L-lysyl-[protein] + tRNA(Leu) + H(+). The catalysed reaction is N-terminal L-arginyl-[protein] + L-leucyl-tRNA(Leu) = N-terminal L-leucyl-L-arginyl-[protein] + tRNA(Leu) + H(+). It catalyses the reaction L-phenylalanyl-tRNA(Phe) + an N-terminal L-alpha-aminoacyl-[protein] = an N-terminal L-phenylalanyl-L-alpha-aminoacyl-[protein] + tRNA(Phe). Functions in the N-end rule pathway of protein degradation where it conjugates Leu, Phe and, less efficiently, Met from aminoacyl-tRNAs to the N-termini of proteins containing an N-terminal arginine or lysine. In Methylococcus capsulatus (strain ATCC 33009 / NCIMB 11132 / Bath), this protein is Leucyl/phenylalanyl-tRNA--protein transferase.